Consider the following 268-residue polypeptide: GTP cyclohydrolase FolE2 (268 aa).

Belongs to the GTP cyclohydrolase IV family.

The enzyme catalyses GTP + H2O = 7,8-dihydroneopterin 3'-triphosphate + formate + H(+). The protein operates within cofactor biosynthesis; 7,8-dihydroneopterin triphosphate biosynthesis; 7,8-dihydroneopterin triphosphate from GTP: step 1/1. Converts GTP to 7,8-dihydroneopterin triphosphate. The protein is GTP cyclohydrolase FolE2 of Ralstonia nicotianae (strain ATCC BAA-1114 / GMI1000) (Ralstonia solanacearum).